A 544-amino-acid polypeptide reads, in one-letter code: Protein angel homolog 2 (544 aa).

This sequence belongs to the CCR4/nocturin family.

The polypeptide is Protein angel homolog 2 (ANGEL2) (Bos taurus (Bovine)).